Consider the following 432-residue polypeptide: Adenylosuccinate synthetase (432 aa).

Residues 13–19 and 41–43 contribute to the GTP site; these read GDEGKGK and GHT. The active-site Proton acceptor is aspartate 14. Positions 14 and 41 each coordinate Mg(2+). Residues 14–17, 39–42, threonine 130, arginine 144, glutamine 225, threonine 240, and arginine 304 contribute to the IMP site; these read DEGK and NAGH. Residue histidine 42 is the Proton donor of the active site. Position 300 to 306 (300 to 306) interacts with substrate; the sequence is ATTGRRR. GTP contacts are provided by residues arginine 306, 332-334, and 415-417; these read KLD and STG.

It belongs to the adenylosuccinate synthetase family. Homodimer. It depends on Mg(2+) as a cofactor.

The protein resides in the cytoplasm. The catalysed reaction is IMP + L-aspartate + GTP = N(6)-(1,2-dicarboxyethyl)-AMP + GDP + phosphate + 2 H(+). The protein operates within purine metabolism; AMP biosynthesis via de novo pathway; AMP from IMP: step 1/2. Functionally, plays an important role in the de novo pathway of purine nucleotide biosynthesis. Catalyzes the first committed step in the biosynthesis of AMP from IMP. In Edwardsiella ictaluri (strain 93-146), this protein is Adenylosuccinate synthetase.